The chain runs to 97 residues: MYIENNSLVLIIPETNSITPQLFTIHDNKPICVCSRYSLIPSKKENVQISYIDNIHMYFRSFKNLYLVNPRNHDIIKVFNFLKNYKWGGNFYLLFNV.

It belongs to the chordopoxvirinae A15 family. In terms of assembly, part of a complex composed of A30, G7, F10 kinase, A15, D2, D3, and J1.

Its subcellular location is the host cytoplasm. It localises to the virion. Late protein which is a part of a large complex required for early virion morphogenesis. This complex participates in the formation of virosomes and the incorporation of virosomal contents into nascent immature virions. A15 is required for the stability and kinase activity of F10. This is Core protein A15 homolog from Vertebrata (FPV).